The chain runs to 340 residues: Anthranilate phosphoribosyltransferase (340 aa).

5-phospho-alpha-D-ribose 1-diphosphate-binding positions include glycine 78, 81–82 (GD), threonine 86, 88–91 (NIST), 106–114 (KHGNRSVSS), and serine 118. An anthranilate-binding site is contributed by glycine 78. Serine 90 is a Mg(2+) binding site. An anthranilate-binding site is contributed by asparagine 109. Arginine 164 provides a ligand contact to anthranilate. 2 residues coordinate Mg(2+): aspartate 223 and glutamate 224.

This sequence belongs to the anthranilate phosphoribosyltransferase family. In terms of assembly, homodimer. Mg(2+) serves as cofactor.

It carries out the reaction N-(5-phospho-beta-D-ribosyl)anthranilate + diphosphate = 5-phospho-alpha-D-ribose 1-diphosphate + anthranilate. It participates in amino-acid biosynthesis; L-tryptophan biosynthesis; L-tryptophan from chorismate: step 2/5. In terms of biological role, catalyzes the transfer of the phosphoribosyl group of 5-phosphorylribose-1-pyrophosphate (PRPP) to anthranilate to yield N-(5'-phosphoribosyl)-anthranilate (PRA). The chain is Anthranilate phosphoribosyltransferase from Bacillus pumilus (Bacillus mesentericus).